The chain runs to 66 residues: Large ribosomal subunit protein bL33c (66 aa).

It belongs to the bacterial ribosomal protein bL33 family.

Its subcellular location is the plastid. It is found in the chloroplast. In Gossypium barbadense (Sea Island cotton), this protein is Large ribosomal subunit protein bL33c.